The following is a 325-amino-acid chain: MKVSLVLLIAVFGLAMVAAEETLESKLQMALKSLLQENEELNLEGRDTKGGCERATNNCNGHGDCVQGRWGQYYCKCTLPYRVGGSESSCYMPKDKEEDVEIETKDTVARCERDTKNCDGHGTCQLSTFGRRTGQYICFCDAGYRKPNSYGGCSPSSARELEYLSYVARDVEMEMLARDSVYQCNRDTNSCDGFGKCEKSTFGRTTGQYICNCDDGYRNNAYGGCSPRTEREIEYLSMIARDQELEMQARDSLPQCNRDTNYCDGFGQCVKSTFGRTTGQYICSCNDGYENNLYGGCSPKDNEDEEVDTDRKMEILRSLANLLEE.

Residues 1 to 19 (MKVSLVLLIAVFGLAMVAA) form the signal peptide. A propeptide spanning residues 20–45 (EETLESKLQMALKSLLQENEELNLEG) is cleaved from the precursor. EGF-like domains follow at residues 48 to 91 (TKGG…SSCY) and 107 to 154 (TVAR…GGCS). 6 disulfide bridges follow: Cys52–Cys65, Cys59–Cys75, Cys77–Cys90, Cys111–Cys124, Cys118–Cys138, and Cys140–Cys153. The propeptide occupies 160–177 (ELEYLSYVARDVEMEMLA). The region spanning 180-226 (SVYQCNRDTNSCDGFGKCEKSTFGRTTGQYICNCDDGYRNNAYGGCS) is the EGF-like 3 domain. 3 disulfide bridges follow: Cys184–Cys197, Cys191–Cys211, and Cys213–Cys225. A propeptide spanning residues 232–249 (EIEYLSMIARDQELEMQA) is cleaved from the precursor. The EGF-like 4 domain occupies 252 to 298 (SLPQCNRDTNYCDGFGQCVKSTFGRTTGQYICSCNDGYENNLYGGCS). 3 disulfide bridges follow: Cys256/Cys269, Cys263/Cys283, and Cys285/Cys297. Positions 313–325 (MEILRSLANLLEE) are excised as a propeptide.

The protein localises to the secreted. It localises to the extracellular space. Its subcellular location is the extracellular matrix. Its function is as follows. The EGIP peptides are factors effective to extrude the archenteron toward outside of embryos. May have a role in the induction of gastrulation. The chain is Exogastrula-inducing polypeptide from Heliocidaris crassispina (Sea urchin).